The sequence spans 342 residues: Ribosomal RNA small subunit methyltransferase C (342 aa).

This sequence belongs to the methyltransferase superfamily. RsmC family. As to quaternary structure, monomer.

It is found in the cytoplasm. The catalysed reaction is guanosine(1207) in 16S rRNA + S-adenosyl-L-methionine = N(2)-methylguanosine(1207) in 16S rRNA + S-adenosyl-L-homocysteine + H(+). Specifically methylates the guanine in position 1207 of 16S rRNA in the 30S particle. The sequence is that of Ribosomal RNA small subunit methyltransferase C from Shewanella loihica (strain ATCC BAA-1088 / PV-4).